Consider the following 270-residue polypeptide: Bacterial microcompartment shell protein PduB (270 aa).

Residues 6–18 form a probable helix that binds cargo to the BMC shell region; sequence LVEQIMAQVIARV. 2 BMC circularly permuted domains span residues 47-152 and 154-258; these read EFVG…DRTF and DVYG…LATL.

The protein belongs to the EutL/PduB family. Homotrimerizes to form a pseudohexamer with a central pore. The trimers pack into an array. In purified BMCs seen as a 28.0 kDa and 25.0 kDa form, both of which have been N-terminally sequenced and whose N-fMet is removed; the smaller form is called PduB'.

It is found in the bacterial microcompartment. It functions in the pathway polyol metabolism; 1,2-propanediol degradation. Functionally, the two proteins produced are among the major shell proteins of the bacterial microcompartment (BMC) dedicated to 1,2-propanediol (1,2-PD) degradation. Required for structural integrity of BMCs and to mitigate propionaldehyde toxicity. The N-terminal 13 residues are important for correct assembly of the BMC shell. The isolated BMC shell component protein ratio for J:A:B':B:K:T:U is approximately 15:10:7:6:1:1:2. The N-terminus of the long form (PduB) is required for correct formation of BMCs, deletions in the first 37 residues have substantially reduced levels of the major lumen enzymes. May play a major role in binding the enzyme contents to the shell. The 1,2-PD-specific bacterial microcompartment (BMC) concentrates low levels of 1,2-PD catabolic enzymes, concentrates volatile reaction intermediates thus enhancing pathway flux and keeps the level of toxic, mutagenic propionaldehyde low. The polypeptide is Bacterial microcompartment shell protein PduB (Salmonella typhimurium (strain LT2 / SGSC1412 / ATCC 700720)).